A 318-amino-acid chain; its full sequence is CRISPR-associated protein Cas7/Csa2 1 (318 aa).

Belongs to the CRISPR-associated protein Cas7/Cst2/DevR family. Subtype I-a/Apern subfamily. Part of the aCascade ribonucleoprotein complex, minimally composed of Csa2 and Cas5a, which binds crRNA. Other possible components of aCascade in strain P1 are Cas6b (SSO1437) and Csa5 (SSO1443), while SSO1399, Cas5b (SSO1400) and SSO1401 have sometimes been seen weakly associated. Csa2 is probably the major RNA-binding subunit. The Csa2-Cas5a-crRNA complex also binds target DNA homologous to crRNA, probably forming an R-loop. Purified aCascade forms a filament about 6 nm in width.

In terms of biological role, CRISPR (clustered regularly interspaced short palindromic repeat) is an adaptive immune system that provides protection against mobile genetic elements (viruses, transposable elements and conjugative plasmids). CRISPR clusters contain spacers, sequences complementary to antecedent mobile elements, and target invading nucleic acids. CRISPR clusters are transcribed and processed into CRISPR RNA (crRNA). In Saccharolobus solfataricus (strain ATCC 35092 / DSM 1617 / JCM 11322 / P2) (Sulfolobus solfataricus), this protein is CRISPR-associated protein Cas7/Csa2 1 (cas7a).